Here is a 158-residue protein sequence, read N- to C-terminus: C-type lectin BML-2 (158 aa).

The first 23 residues, 1–23, serve as a signal peptide directing secretion; it reads MGHFTFTGLCLLAMFLSLRGAEC. Disulfide bonds link C26-C37, C54-C154, C61-C156, and C129-C146. Residues 33 to 155 enclose the C-type lectin domain; sequence KNGLCYKVFS…CESLHPFLCQ (123 aa). The Mannose-binding motif lies at 119–121; the sequence is EPN. An N-linked (GlcNAc...) asparagine glycan is attached at N121. Ca(2+) is bound by residues E127, N142, and D143.

It belongs to the true venom lectin family. As to quaternary structure, dimer. Probably non-covalently linked. Expressed by the venom gland.

Its subcellular location is the secreted. Functionally, recombinant C-type lectin BML-2 is able to agglutinate erythrocytes. May be a calcium-dependent lectin. The protein is C-type lectin BML-2 of Bungarus multicinctus (Many-banded krait).